Consider the following 538-residue polypeptide: Cytochrome P450 52-M1 (538 aa).

Residues 18 to 38 (GLLPLLFVAFLVLHEPIWLLW) traverse the membrane as a helical segment. Cys484 contacts heme.

The protein belongs to the cytochrome P450 family. Requires heme as cofactor.

It localises to the membrane. The catalysed reaction is an omega-methyl-long-chain fatty acid + reduced [NADPH--hemoprotein reductase] + O2 = an omega-hydroxy-long-chain fatty acid + oxidized [NADPH--hemoprotein reductase] + H2O + H(+). It catalyses the reaction an (omega-1)-ethyl fatty acid + reduced [NADPH--hemoprotein reductase] + O2 = an (omega-1)-hydroxy-long-chain fatty acid + oxidized [NADPH--hemoprotein reductase] + H2O + H(+). It carries out the reaction (9Z)-octadecenoate + reduced [NADPH--hemoprotein reductase] + O2 = 18-hydroxy-(9Z)-octadecenoate + oxidized [NADPH--hemoprotein reductase] + H2O + H(+). The enzyme catalyses (9Z)-octadecenoate + reduced [NADPH--hemoprotein reductase] + O2 = 17-hydroxy-(9Z)-octadecenoate + oxidized [NADPH--hemoprotein reductase] + H2O + H(+). The catalysed reaction is (9Z,12Z)-octadecadienoate + reduced [NADPH--hemoprotein reductase] + O2 = 18-hydroxy-(9Z,12Z)-octadecadienoate + oxidized [NADPH--hemoprotein reductase] + H2O + H(+). It catalyses the reaction (9Z,12Z)-octadecadienoate + reduced [NADPH--hemoprotein reductase] + O2 = 17-hydroxy-(9Z,12Z)-octadecadienoate + oxidized [NADPH--hemoprotein reductase] + H2O + H(+). It carries out the reaction hexadecanoate + reduced [NADPH--hemoprotein reductase] + O2 = 16-hydroxyhexadecanoate + oxidized [NADPH--hemoprotein reductase] + H2O + H(+). The enzyme catalyses (9Z)-hexadecenoate + reduced [NADPH--hemoprotein reductase] + O2 = (9Z)-16-hydroxyhexadec-9-enoate + oxidized [NADPH--hemoprotein reductase] + H2O + H(+). The catalysed reaction is octadecanoate + reduced [NADPH--hemoprotein reductase] + O2 = 18-hydroxyoctadecanoate + oxidized [NADPH--hemoprotein reductase] + H2O + H(+). In terms of biological role, catalyzes the first step of sophorolipid biosynthesis. Catalyzes the terminal (at the omega-position) or subterminal (at the omega(-1)-position) hydroxylation of a fatty acid. This converts the fatty acid to a substrate for the subsequent glycosyltransferase reactions. Oleic acid is the preferred substrate, but it acts on various other C-16, C-18 and C-20 saturated and unsaturated fatty acids, namely palmitic, palmitoleic, stearic, linoleic, cis-9,10-epoxystearic, trans-9,10-epoxystearic and arachidonic acid. The polypeptide is Cytochrome P450 52-M1 (Starmerella bombicola (Yeast)).